A 274-amino-acid chain; its full sequence is NAD kinase (274 aa).

Residue aspartate 59 is the Proton acceptor of the active site. NAD(+) is bound by residues 59–60, 133–134, arginine 144, aspartate 163, 174–179, and glutamine 233; these read DG, ND, and TAYALS.

The protein belongs to the NAD kinase family. It depends on a divalent metal cation as a cofactor.

It is found in the cytoplasm. It carries out the reaction NAD(+) + ATP = ADP + NADP(+) + H(+). Its function is as follows. Involved in the regulation of the intracellular balance of NAD and NADP, and is a key enzyme in the biosynthesis of NADP. Catalyzes specifically the phosphorylation on 2'-hydroxyl of the adenosine moiety of NAD to yield NADP. The protein is NAD kinase of Aquifex aeolicus (strain VF5).